Reading from the N-terminus, the 366-residue chain is MTPEHLPTEQYEAQLAEKVVRLQSMMAPFSDLVPEVFRSPVSHYRMRAEFRIWHDGDDLYHIIFDQQTKSRIRVDSFPAASELINQLMTAMIAGVRNNPILRHKLFQIDYLTTLSNQAVVSLLYHKKLDDEWRQQAEALRDALRAQNLNVHLIGRATKTKIALDQDYIDERLPIAGKEMIYRQVENSFTQPNAAMNIQMLEWALDVTKGSKGDLLELYCGNGNFSLALARNFDRVLATEIAKPSVAAAQYNIAANHIDNVQIIRMAAEEFTQAMNGVREFNRLQGIDLKSYQCETIFVDPPRSGLDSETEKMVQAYPRILYISCNPETLCKNLETLSQTHKVERLALFDQFPYTHHMECGVLLTAK.

S-adenosyl-L-methionine-binding residues include glutamine 190, tyrosine 218, asparagine 223, glutamate 239, and aspartate 299. Cysteine 324 (nucleophile) is an active-site residue. Glutamate 358 (proton acceptor) is an active-site residue.

Belongs to the class I-like SAM-binding methyltransferase superfamily. RNA M5U methyltransferase family. TrmA subfamily.

It carries out the reaction uridine(54) in tRNA + S-adenosyl-L-methionine = 5-methyluridine(54) in tRNA + S-adenosyl-L-homocysteine + H(+). The enzyme catalyses uridine(341) in tmRNA + S-adenosyl-L-methionine = 5-methyluridine(341) in tmRNA + S-adenosyl-L-homocysteine + H(+). Its function is as follows. Dual-specificity methyltransferase that catalyzes the formation of 5-methyluridine at position 54 (m5U54) in all tRNAs, and that of position 341 (m5U341) in tmRNA (transfer-mRNA). This chain is tRNA/tmRNA (uracil-C(5))-methyltransferase, found in Escherichia coli (strain UTI89 / UPEC).